A 621-amino-acid chain; its full sequence is Chaperone protein HtpG (621 aa).

An a; substrate-binding region spans residues 1–328; the sequence is MTQEKKKFDA…SEDLPLNISR (328 aa). The interval 329 to 544 is b; sequence ESLQHNNVLE…DTAMDIRMER (216 aa). A c region spans residues 545–621; the sequence is FLIEQKQIAN…LNDILQKAIL (77 aa).

Belongs to the heat shock protein 90 family. As to quaternary structure, homodimer.

It localises to the cytoplasm. In terms of biological role, molecular chaperone. Has ATPase activity. The sequence is that of Chaperone protein HtpG from Rickettsia prowazekii (strain Madrid E).